A 363-amino-acid chain; its full sequence is Phospho-N-acetylmuramoyl-pentapeptide-transferase (363 aa).

A run of 11 helical transmembrane segments spans residues 4–24 (NLLV…NVIV), 28–48 (IAIL…IKYF), 72–92 (TPTM…LMLA), 96–116 (NIYV…GLID), 129–149 (INAT…CMIV), 169–189 (LTID…IGSS), 200–220 (GLVT…CYLA), 241–261 (ELTV…WYNI), 266–286 (IFMG…ISVI), 294–314 (GIIG…IYSI), and 342–362 (IVSR…SSLI).

Belongs to the glycosyltransferase 4 family. MraY subfamily. The cofactor is Mg(2+).

It localises to the cell inner membrane. It carries out the reaction UDP-N-acetyl-alpha-D-muramoyl-L-alanyl-gamma-D-glutamyl-meso-2,6-diaminopimeloyl-D-alanyl-D-alanine + di-trans,octa-cis-undecaprenyl phosphate = di-trans,octa-cis-undecaprenyl diphospho-N-acetyl-alpha-D-muramoyl-L-alanyl-D-glutamyl-meso-2,6-diaminopimeloyl-D-alanyl-D-alanine + UMP. The protein operates within cell wall biogenesis; peptidoglycan biosynthesis. In terms of biological role, catalyzes the initial step of the lipid cycle reactions in the biosynthesis of the cell wall peptidoglycan: transfers peptidoglycan precursor phospho-MurNAc-pentapeptide from UDP-MurNAc-pentapeptide onto the lipid carrier undecaprenyl phosphate, yielding undecaprenyl-pyrophosphoryl-MurNAc-pentapeptide, known as lipid I. The polypeptide is Phospho-N-acetylmuramoyl-pentapeptide-transferase (Orientia tsutsugamushi (strain Ikeda) (Rickettsia tsutsugamushi)).